Here is a 230-residue protein sequence, read N- to C-terminus: MLNSTIPARIAVKICGLTLPEQAIAIAQMGVSALGFITVPHSPRYVSAPTIAEICRQLPPAVLTVAVVANLDLEALANLVTTTGVQALQLHGSESPEFCQSVRQTFPNIVLIKALRVQSAATLAAIPAYASTVDRILLDAYHPQQLGGTGQPFDWTLLKALHIPCPWWLAGGITPENCRQAIAQTQPQGIDLASGVESRPGVKDLGRVAALLSNLGINANHSLYPEGSRF.

It belongs to the TrpF family.

It catalyses the reaction N-(5-phospho-beta-D-ribosyl)anthranilate = 1-(2-carboxyphenylamino)-1-deoxy-D-ribulose 5-phosphate. It functions in the pathway amino-acid biosynthesis; L-tryptophan biosynthesis; L-tryptophan from chorismate: step 3/5. This chain is N-(5'-phosphoribosyl)anthranilate isomerase, found in Thermosynechococcus vestitus (strain NIES-2133 / IAM M-273 / BP-1).